The sequence spans 349 residues: MQPFDSGHDDLVHDVVYDFYGRHVATCSSDQHIKVFKLDKDTSNWELSDSWRAHDSSIVAIDWASPEYGRIIASASYDKTVKLWEEDPDQEECSGRRWNKLCTLNDSKGSLYSVKFAPAHLGLKLACLGNDGILRLYDALEPSDLRSWTLTSEMKVLSIPPANHLQSDFCLSWCPSRFSPEKLAVSALEQAIIYQRGKDGKLHVAAKLPGHKSLIRSISWAPSIGRWYQLIATGCKDGRIRIFKITEKLSPLASEESLTNSNMFDNSADVDMDAQGRSDSNTEEKAELQSNLQVELLSEHDDHNGEVWSVSWNLTGTILSSAGDDGKVRLWKATYSNEFKCMSVITAQQ.

WD repeat units follow at residues 7–46, 53–94, 106–147, 153–192, and 210–253; these read GHDDLVHDVVYDFYGRHVATCSSDQHIKVFKLDKDTSNWE, AHDS…EECS, DSKG…DLRS, EMKVLSIPPANHLQSDFCLSWCPSRFSPEKLAVSALEQAI, and GHKS…SPLA. A Phosphoserine modification is found at Ser257. The disordered stretch occupies residues 263–285; that stretch reads MFDNSADVDMDAQGRSDSNTEEK. Positions 274 to 285 are enriched in basic and acidic residues; that stretch reads AQGRSDSNTEEK. One copy of the WD 6 repeat lies at 302 to 341; sequence DHNGEVWSVSWNLTGTILSSAGDDGKVRLWKATYSNEFKC.

This sequence belongs to the WD repeat SEC13 family. In terms of assembly, component of the nuclear pore complex (NPC). NPC constitutes the exclusive means of nucleocytoplasmic transport. NPCs allow the passive diffusion of ions and small molecules and the active, nuclear transport receptor-mediated bidirectional transport of macromolecules such as proteins, RNAs, ribonucleoparticles (RNPs), and ribosomal subunits across the nuclear envelope. Due to its 8-fold rotational symmetry, all subunits are present with 8 copies or multiples thereof. SEH1 is part of the heptameric 0.5 MDa autoassembling NUP84 NPC subcomplex (NUP84, NUP85, NUP120, NUP133, NUP145C, SEC13 and SEH1). Component of the SEA complex composed of at least IML1/SEA1, RTC1/SEA2, MTC5/SEA3, NPR2, NPR3, SEA4, SEC13 and SEH1.

The protein resides in the nucleus. The protein localises to the nuclear pore complex. Its subcellular location is the nucleus membrane. It is found in the vacuole membrane. Its function is as follows. Functions as a component of the nuclear pore complex (NPC). NPC components, collectively referred to as nucleoporins (NUPs), can play the role of both NPC structural components and of docking or interaction partners for transiently associated nuclear transport factors. Involved in nuclear poly(A)+ RNA export and NPC biogenesis. It is also required for normal nuclear morphology. Component of the SEA complex which coats the vacuolar membrane and is involved in intracellular trafficking, autophagy, response to nitrogen starvation, and amino acid biogenesis. The polypeptide is Nucleoporin SEH1 (SEH1) (Saccharomyces cerevisiae (strain ATCC 204508 / S288c) (Baker's yeast)).